The sequence spans 479 residues: Spindly-like protein spdl-1 (479 aa).

3 coiled-coil regions span residues 4–180, 210–250, and 321–357; these read DEEK…EGEL, EEDL…RFNV, and LMKD…KCAH.

In terms of assembly, interacts with Zwilch homolog zwl-1, a component of the RZZ complex. Interacts with mdf-1 and mdf-2.

The protein localises to the chromosome. It is found in the centromere. The protein resides in the kinetochore. Its subcellular location is the cytoplasm. It localises to the cytoskeleton. The protein localises to the spindle pole. Transient kinetochore component required for chromosome and spindle pole alignment and chromosome segregation during mitosis. Functions downstream of the RZZ complex to mediate kinetochore-microtubule attachments and nuclear envelope breakdown during cell division. Required for kinetochore assembly and localizes the checkpoint proteins mdf-1 and mdf-2, dynein and dynactin to unattached kinetochores. Dynein is believed to control the initial lateral interaction between the kinetochore and spindle microtubules and to facilitate the subsequent formation of end-on kinetochore-microtubule attachments mediated by the NDC80 complex. Required for embryonic development. The sequence is that of Spindly-like protein spdl-1 from Caenorhabditis elegans.